A 148-amino-acid polypeptide reads, in one-letter code: Mediator of RNA polymerase II transcription subunit 31 (148 aa).

The protein belongs to the Mediator complex subunit 31 family. In terms of assembly, component of the Mediator complex.

The protein localises to the nucleus. In terms of biological role, component of the Mediator complex, a coactivator involved in the regulated transcription of nearly all RNA polymerase II-dependent genes. Mediator functions as a bridge to convey information from gene-specific regulatory proteins to the basal RNA polymerase II transcription machinery. Mediator is recruited to promoters by direct interactions with regulatory proteins and serves as a scaffold for the assembly of a functional preinitiation complex with RNA polymerase II and the general transcription factors. This Taenia solium (Pork tapeworm) protein is Mediator of RNA polymerase II transcription subunit 31.